We begin with the raw amino-acid sequence, 87 residues long: Large ribosomal subunit protein bL31B (87 aa).

It belongs to the bacterial ribosomal protein bL31 family. Type B subfamily. Part of the 50S ribosomal subunit.

The chain is Large ribosomal subunit protein bL31B from Burkholderia thailandensis (strain ATCC 700388 / DSM 13276 / CCUG 48851 / CIP 106301 / E264).